A 255-amino-acid polypeptide reads, in one-letter code: 5-oxoprolinase subunit A (255 aa).

The protein belongs to the LamB/PxpA family. In terms of assembly, forms a complex composed of PxpA, PxpB and PxpC.

It carries out the reaction 5-oxo-L-proline + ATP + 2 H2O = L-glutamate + ADP + phosphate + H(+). Its function is as follows. Catalyzes the cleavage of 5-oxoproline to form L-glutamate coupled to the hydrolysis of ATP to ADP and inorganic phosphate. This chain is 5-oxoprolinase subunit A, found in Nitrobacter hamburgensis (strain DSM 10229 / NCIMB 13809 / X14).